The sequence spans 94 residues: Integration host factor subunit beta (94 aa).

The protein belongs to the bacterial histone-like protein family. In terms of assembly, heterodimer of an alpha and a beta chain.

Its function is as follows. This protein is one of the two subunits of integration host factor, a specific DNA-binding protein that functions in genetic recombination as well as in transcriptional and translational control. This is Integration host factor subunit beta from Vibrio atlanticus (strain LGP32) (Vibrio splendidus (strain Mel32)).